A 709-amino-acid chain; its full sequence is ATP-dependent zinc metalloprotease YME1 homolog (709 aa).

Residues 152 to 182 form a disordered region; that stretch reads FTSDTSSTVSSTPSLNHSLQNSMPPSTPTPP. Over residues 153-165 the composition is skewed to low complexity; that stretch reads TSDTSSTVSSTPS. The helical transmembrane segment at 217–239 threads the bilayer; it reads IFKFIAGLSVASYFVLLGMSIFA. Residue 307–314 participates in ATP binding; the sequence is GPPGTGKT. Residue H530 participates in Zn(2+) binding. Residue E531 is part of the active site. Positions 534 and 608 each coordinate Zn(2+).

The protein in the N-terminal section; belongs to the AAA ATPase family. It in the C-terminal section; belongs to the peptidase M41 family. Requires Zn(2+) as cofactor.

The protein localises to the mitochondrion membrane. Functionally, putative ATP-dependent protease. This chain is ATP-dependent zinc metalloprotease YME1 homolog, found in Schizosaccharomyces pombe (strain 972 / ATCC 24843) (Fission yeast).